We begin with the raw amino-acid sequence, 93 residues long: Small ribosomal subunit protein bS20 (93 aa).

Belongs to the bacterial ribosomal protein bS20 family.

Binds directly to 16S ribosomal RNA. The polypeptide is Small ribosomal subunit protein bS20 (Hydrogenobaculum sp. (strain Y04AAS1)).